The following is a 466-amino-acid chain: Major capsid protein (466 aa).

Belongs to the NCLDV major capsid protein family. As to quaternary structure, homotrimer.

The protein resides in the virion. Its function is as follows. Major capsid protein that self assembles to form an icosahedral capsid. Represents around 50% of the total virion protein mass. This chain is Major capsid protein (MCP), found in Invertebrate iridescent virus 3 (IIV-3).